Here is a 412-residue protein sequence, read N- to C-terminus: Multifunctional CCA protein (412 aa).

2 residues coordinate ATP: glycine 8 and arginine 11. The CTP site is built by glycine 8 and arginine 11. Mg(2+) is bound by residues glutamate 21 and aspartate 23. ATP is bound by residues arginine 91, arginine 137, and arginine 140. Positions 91, 137, and 140 each coordinate CTP. Residues 228-329 enclose the HD domain; the sequence is TGIHTLMTLA…LKLFNAIDVW (102 aa).

It belongs to the tRNA nucleotidyltransferase/poly(A) polymerase family. Bacterial CCA-adding enzyme type 1 subfamily. Monomer. Can also form homodimers and oligomers. The cofactor is Mg(2+). Requires Ni(2+) as cofactor.

The catalysed reaction is a tRNA precursor + 2 CTP + ATP = a tRNA with a 3' CCA end + 3 diphosphate. It carries out the reaction a tRNA with a 3' CCA end + 2 CTP + ATP = a tRNA with a 3' CCACCA end + 3 diphosphate. Catalyzes the addition and repair of the essential 3'-terminal CCA sequence in tRNAs without using a nucleic acid template. Adds these three nucleotides in the order of C, C, and A to the tRNA nucleotide-73, using CTP and ATP as substrates and producing inorganic pyrophosphate. tRNA 3'-terminal CCA addition is required both for tRNA processing and repair. Also involved in tRNA surveillance by mediating tandem CCA addition to generate a CCACCA at the 3' terminus of unstable tRNAs. While stable tRNAs receive only 3'-terminal CCA, unstable tRNAs are marked with CCACCA and rapidly degraded. The polypeptide is Multifunctional CCA protein (Yersinia pseudotuberculosis serotype I (strain IP32953)).